The chain runs to 272 residues: Troponin T, fast skeletal muscle (272 aa).

The span at 1–50 (MSDEETEQVEEQYEEEEEAQEEEVQEEAPEPEEVQEDAVAEEEREEDEEE) shows a compositional bias: acidic residues. The segment at 1-75 (MSDEETEQVE…EKVDFDDIQK (75 aa)) is disordered. N-acetylserine is present on Ser-2. Ser-2 carries the post-translational modification Phosphoserine. The span at 63 to 75 (PEGEKVDFDDIQK) shows a compositional bias: basic and acidic residues. Position 91 is a phosphoserine (Ser-91). Residues 114 to 156 (RAERAEQQRIRAEKEREPQNRLAEEKARREEEDAKRRAEDDMK) show a composition bias toward basic and acidic residues. The tract at residues 114 to 193 (RAERAEQQRI…TAREMKKKIL (80 aa)) is disordered. A phosphoserine mark is found at Ser-162, Ser-169, and Ser-170. The segment covering 184–193 (TAREMKKKIL) has biased composition (basic and acidic residues). Ser-206 carries the phosphoserine modification. Tyr-222 bears the Phosphotyrosine mark. The disordered stretch occupies residues 248 to 272 (RIDQAQKHSKKAGATAKGKVGGRWK).

This sequence belongs to the troponin T family. In terms of tissue distribution, expressed predominantly in skeletal muscle.

Its function is as follows. Troponin T is the tropomyosin-binding subunit of troponin, the thin filament regulatory complex which confers calcium-sensitivity to striated muscle actomyosin ATPase activity. This is Troponin T, fast skeletal muscle (Tnnt3) from Mus musculus (Mouse).